The primary structure comprises 67 residues: Large ribosomal subunit protein uL29 (67 aa).

Belongs to the universal ribosomal protein uL29 family.

The polypeptide is Large ribosomal subunit protein uL29 (Desulfitobacterium hafniense (strain DSM 10664 / DCB-2)).